We begin with the raw amino-acid sequence, 342 residues long: MITLEQVTKIYQAANGSVTAVDNVSLEIREGEIFGIIGYSGAGKSTLIRLLNGLEKPTSGRVVVAGRDMTRVKGRELRKARQEIGMIFQHFNLLWSRTVRENIAFPLEIAGVPKEERNKRVDELIELVGLSGREDAYPSQLSGGQKQRVGIARALANNPKVLLCDEATSALDPQTTDAILDLLVDINKRLGLTIVLITHEMHVIRKICDRVAVMESGRIVEQGEVLHVFRNPQQPITKRFVKQLIEPEETEEAISHLFGQYPSGLIAQLTFVGAAAGKPLITEVVRQFAVDVNILQGKISQTHQGAYGVLFVHLDGARDEIDRALDYIQRQQVAVEVIHDAR.

Residues 2 to 241 (ITLEQVTKIY…PQQPITKRFV (240 aa)) enclose the ABC transporter domain. Position 38-45 (38-45 (GYSGAGKS)) interacts with ATP.

It belongs to the ABC transporter superfamily. Methionine importer (TC 3.A.1.24) family. As to quaternary structure, the complex is composed of two ATP-binding proteins (MetN), two transmembrane proteins (MetI) and a solute-binding protein (MetQ).

Its subcellular location is the cell membrane. The catalysed reaction is L-methionine(out) + ATP + H2O = L-methionine(in) + ADP + phosphate + H(+). It catalyses the reaction D-methionine(out) + ATP + H2O = D-methionine(in) + ADP + phosphate + H(+). Its function is as follows. Part of the ABC transporter complex MetNIQ involved in methionine import. Responsible for energy coupling to the transport system. The polypeptide is Methionine import ATP-binding protein MetN (Geobacillus kaustophilus (strain HTA426)).